Consider the following 130-residue polypeptide: Glycine cleavage system H protein (130 aa).

The Lipoyl-binding domain maps to 22–103; it reads KAYIGISDCA…PYGSWIIAVE (82 aa). Lys63 is subject to N6-lipoyllysine.

This sequence belongs to the GcvH family. The glycine cleavage system is composed of four proteins: P, T, L and H. (R)-lipoate is required as a cofactor.

In terms of biological role, the glycine cleavage system catalyzes the degradation of glycine. The H protein shuttles the methylamine group of glycine from the P protein to the T protein. In Clostridium botulinum (strain Kyoto / Type A2), this protein is Glycine cleavage system H protein.